The sequence spans 59 residues: MKVFLLTILLCFLIAYCAGTNIFDPDNNPMCIPQGEKCVMRDFGCCLPYQCDWMKNRCK.

Residues 1–19 form the signal peptide; it reads MKVFLLTILLCFLIAYCAG. Disulfide bonds link C31–C46, C38–C51, and C45–C58.

Belongs to the venom Ptu1-like knottin family. In terms of tissue distribution, expressed by the venom gland.

It is found in the secreted. In terms of biological role, binds reversibly and blocks P/Q-type voltage-gated calcium channels (Cav). The protein is U-reduvitoxin-Pr6a of Platymeris rhadamanthus (Red spot assassin bug).